The following is a 107-amino-acid chain: MTLEKTTRMNYLFDFYQTLLTSKQKSYMSLYYLDDFSLGEIAEEYHVSRQAVYDNIKRTEAMLEQYEEKLLLFKKFQERKKIFEALRKLTDGQPEAESLIDALEKLD.

The protein belongs to the UPF0122 family.

Its function is as follows. Might take part in the signal recognition particle (SRP) pathway. This is inferred from the conservation of its genetic proximity to ftsY/ffh. May be a regulatory protein. The chain is UPF0122 protein BLi01817/BL02321 from Bacillus licheniformis (strain ATCC 14580 / DSM 13 / JCM 2505 / CCUG 7422 / NBRC 12200 / NCIMB 9375 / NCTC 10341 / NRRL NRS-1264 / Gibson 46).